A 502-amino-acid chain; its full sequence is Premnaspirodiene oxygenase (502 aa).

The chain crosses the membrane as a helical span at residues 2 to 22 (QFFSLVSIFLFLSFLFLLRKW). Residue cysteine 440 coordinates heme.

The protein belongs to the cytochrome P450 family. Heme serves as cofactor.

It is found in the membrane. It catalyses the reaction (-)-vetispiradiene + 2 reduced [NADPH--hemoprotein reductase] + 2 O2 = solavetivone + 2 oxidized [NADPH--hemoprotein reductase] + 3 H2O + 2 H(+). Functionally, involved in the biosynthesis of solavetivone, a potent antifungal phytoalexin. Catalyzes the successive and independent hydroxylations of premnaspirodiene and solavetivol. The first hydroxylation step is 3-fold more efficient than the second hydroxylation reaction. This Hyoscyamus muticus (Egyptian henbane) protein is Premnaspirodiene oxygenase (CYP71D55).